The primary structure comprises 445 residues: Probable cytosol aminopeptidase (445 aa).

Lys-217 and Asp-222 together coordinate Mn(2+). Residue Lys-229 is part of the active site. Residues Asp-240, Asp-299, and Glu-301 each coordinate Mn(2+). Arg-303 is an active-site residue.

The protein belongs to the peptidase M17 family. Mn(2+) is required as a cofactor.

The protein localises to the cytoplasm. The catalysed reaction is Release of an N-terminal amino acid, Xaa-|-Yaa-, in which Xaa is preferably Leu, but may be other amino acids including Pro although not Arg or Lys, and Yaa may be Pro. Amino acid amides and methyl esters are also readily hydrolyzed, but rates on arylamides are exceedingly low.. The enzyme catalyses Release of an N-terminal amino acid, preferentially leucine, but not glutamic or aspartic acids.. Presumably involved in the processing and regular turnover of intracellular proteins. Catalyzes the removal of unsubstituted N-terminal amino acids from various peptides. This is Probable cytosol aminopeptidase (pepA) from Mycoplasma pneumoniae (strain ATCC 29342 / M129 / Subtype 1) (Mycoplasmoides pneumoniae).